The following is a 392-amino-acid chain: Magnesium-chelatase 38 kDa subunit (392 aa).

The span at 1-17 (MTQTANAAKKTTSTKAS) shows a compositional bias: low complexity. The disordered stretch occupies residues 1-21 (MTQTANAAKKTTSTKASAAKE). Residue 80 to 87 (GHRGTGKS) coordinates ATP.

The protein belongs to the Mg-chelatase subunits D/I family.

The catalysed reaction is protoporphyrin IX + Mg(2+) + ATP + H2O = Mg-protoporphyrin IX + ADP + phosphate + 3 H(+). It participates in porphyrin-containing compound metabolism; bacteriochlorophyll biosynthesis. Functionally, involved in bacteriochlorophyll biosynthesis; introduces a magnesium ion into protoporphyrin IX to yield Mg-protoporphyrin IX. This is Magnesium-chelatase 38 kDa subunit (bchI) from Chlorobaculum tepidum (strain ATCC 49652 / DSM 12025 / NBRC 103806 / TLS) (Chlorobium tepidum).